Here is a 178-residue protein sequence, read N- to C-terminus: Cell division protein SepF (178 aa).

Residues 21–46 (YESEQSVATHHDEERPQAQEREERRA) are compositionally biased toward basic and acidic residues. The interval 21-65 (YESEQSVATHHDEERPQAQEREERRAPAPVREVVREMPTVDAEEE) is disordered.

The protein belongs to the SepF family. Homodimer. Interacts with FtsZ.

The protein resides in the cytoplasm. In terms of biological role, cell division protein that is part of the divisome complex and is recruited early to the Z-ring. Probably stimulates Z-ring formation, perhaps through the cross-linking of FtsZ protofilaments. Its function overlaps with FtsA. This is Cell division protein SepF from Paenarthrobacter aurescens (strain TC1).